We begin with the raw amino-acid sequence, 206 residues long: Ribosomal RNA small subunit methyltransferase G (206 aa).

Residues Gly74, Leu79, 125 to 126, and Arg140 each bind S-adenosyl-L-methionine; that span reads VE.

This sequence belongs to the methyltransferase superfamily. RNA methyltransferase RsmG family.

It localises to the cytoplasm. The catalysed reaction is guanosine(527) in 16S rRNA + S-adenosyl-L-methionine = N(7)-methylguanosine(527) in 16S rRNA + S-adenosyl-L-homocysteine. Its function is as follows. Specifically methylates the N7 position of guanine in position 527 of 16S rRNA. The sequence is that of Ribosomal RNA small subunit methyltransferase G from Shewanella sp. (strain MR-7).